A 100-amino-acid chain; its full sequence is Urease subunit gamma (100 aa).

It belongs to the urease gamma subunit family. Heterotrimer of UreA (gamma), UreB (beta) and UreC (alpha) subunits. Three heterotrimers associate to form the active enzyme.

The protein resides in the cytoplasm. The catalysed reaction is urea + 2 H2O + H(+) = hydrogencarbonate + 2 NH4(+). It participates in nitrogen metabolism; urea degradation; CO(2) and NH(3) from urea (urease route): step 1/1. This chain is Urease subunit gamma, found in Staphylococcus xylosus.